Consider the following 511-residue polypeptide: IWS1-like protein (511 aa).

Positions 1-200 are disordered; sequence MSDHEEESHG…DDGPVDRHGR (200 aa). Composition is skewed to low complexity over residues 11–30 and 55–86; these read ASPT…PISP and APAS…SPVK. Acidic residues predominate over residues 94-103; sequence DSDEDSDAEE. The span at 134–143 shows a compositional bias: basic and acidic residues; the sequence is HEGTSKKEPT. A compositionally biased stretch (acidic residues) spans 166 to 179; it reads LDEFVEGRDEEESQ. One can recognise a TFIIS N-terminal domain in the interval 294 to 374; it reads SALSEWLAPL…GEWARPIYHL (81 aa). A disordered region spans residues 382-454; that stretch reads SRQEREERDY…RARVPKPSTK (73 aa). Composition is skewed to basic and acidic residues over residues 383 to 395 and 414 to 425; these read RQER…SRMP and DQPKRPRIRDAD.

It belongs to the IWS1 family.

The protein localises to the nucleus. In Caenorhabditis elegans, this protein is IWS1-like protein.